We begin with the raw amino-acid sequence, 374 residues long: Isocitrate dehydrogenase [NAD] catalytic subunit 5, mitochondrial (374 aa).

A mitochondrion-targeting transit peptide spans 1 to 44 (MTMAANLARRLIGNRSTQILGAVNSSSGAASSVARAFCSSTTPI). Arg127, Arg137, Arg158, and Asp245 together coordinate substrate. Residues Asp245, Asp269, and Asp273 each contribute to the Mg(2+) site.

It belongs to the isocitrate and isopropylmalate dehydrogenases family. As to quaternary structure, heterooligomer of catalytic and regulatory subunits. Mg(2+) serves as cofactor. It depends on Mn(2+) as a cofactor. As to expression, ubiquitous.

It localises to the mitochondrion. It carries out the reaction D-threo-isocitrate + NAD(+) = 2-oxoglutarate + CO2 + NADH. Performs an essential role in the oxidative function of the citric acid cycle. The protein is Isocitrate dehydrogenase [NAD] catalytic subunit 5, mitochondrial (IDH5) of Arabidopsis thaliana (Mouse-ear cress).